The chain runs to 165 residues: Cyclic pyranopterin monophosphate synthase (165 aa).

Residues 83 to 85 (FCH) and 120 to 121 (ME) contribute to the substrate site. D135 is a catalytic residue.

This sequence belongs to the MoaC family. Homohexamer; trimer of dimers.

The catalysed reaction is (8S)-3',8-cyclo-7,8-dihydroguanosine 5'-triphosphate = cyclic pyranopterin phosphate + diphosphate. It functions in the pathway cofactor biosynthesis; molybdopterin biosynthesis. Catalyzes the conversion of (8S)-3',8-cyclo-7,8-dihydroguanosine 5'-triphosphate to cyclic pyranopterin monophosphate (cPMP). This Xanthomonas campestris pv. campestris (strain 8004) protein is Cyclic pyranopterin monophosphate synthase.